Here is a 184-residue protein sequence, read N- to C-terminus: Endoribonuclease YbeY (184 aa).

Positions 151, 155, and 161 each coordinate Zn(2+).

It belongs to the endoribonuclease YbeY family. It depends on Zn(2+) as a cofactor.

The protein resides in the cytoplasm. Functionally, single strand-specific metallo-endoribonuclease involved in late-stage 70S ribosome quality control and in maturation of the 3' terminus of the 16S rRNA. The protein is Endoribonuclease YbeY of Prochlorococcus marinus (strain NATL2A).